A 121-amino-acid polypeptide reads, in one-letter code: Basic phospholipase A2 homolog zhaoermiatoxin (121 aa).

Disulfide bonds link Cys26–Cys115, Cys28–Cys44, Cys43–Cys95, Cys49–Cys121, Cys50–Cys88, Cys57–Cys81, and Cys75–Cys86.

The protein belongs to the phospholipase A2 family. Group II subfamily. R49 sub-subfamily. As to quaternary structure, homodimer. As to expression, expressed by the venom gland.

It localises to the secreted. Functionally, snake venom phospholipase A2 homolog that induces myonecrosis, and edema. Has low myotoxic activity. This chain is Basic phospholipase A2 homolog zhaoermiatoxin, found in Protobothrops mangshanensis (Mangshan pitviper).